Consider the following 179-residue polypeptide: Large ribosomal subunit protein uL6 (179 aa).

This sequence belongs to the universal ribosomal protein uL6 family. As to quaternary structure, part of the 50S ribosomal subunit.

Functionally, this protein binds to the 23S rRNA, and is important in its secondary structure. It is located near the subunit interface in the base of the L7/L12 stalk, and near the tRNA binding site of the peptidyltransferase center. The polypeptide is Large ribosomal subunit protein uL6 (Saccharopolyspora erythraea (strain ATCC 11635 / DSM 40517 / JCM 4748 / NBRC 13426 / NCIMB 8594 / NRRL 2338)).